The following is a 145-amino-acid chain: D-aminoacyl-tRNA deacylase (145 aa).

A Gly-cisPro motif, important for rejection of L-amino acids motif is present at residues 137 to 138 (GP).

It belongs to the DTD family. As to quaternary structure, homodimer.

It localises to the cytoplasm. It catalyses the reaction glycyl-tRNA(Ala) + H2O = tRNA(Ala) + glycine + H(+). The enzyme catalyses a D-aminoacyl-tRNA + H2O = a tRNA + a D-alpha-amino acid + H(+). Its function is as follows. An aminoacyl-tRNA editing enzyme that deacylates mischarged D-aminoacyl-tRNAs. Also deacylates mischarged glycyl-tRNA(Ala), protecting cells against glycine mischarging by AlaRS. Acts via tRNA-based rather than protein-based catalysis; rejects L-amino acids rather than detecting D-amino acids in the active site. By recycling D-aminoacyl-tRNA to D-amino acids and free tRNA molecules, this enzyme counteracts the toxicity associated with the formation of D-aminoacyl-tRNA entities in vivo and helps enforce protein L-homochirality. This chain is D-aminoacyl-tRNA deacylase, found in Saccharophagus degradans (strain 2-40 / ATCC 43961 / DSM 17024).